The following is a 194-amino-acid chain: Glycerol-3-phosphate acyltransferase 2 (194 aa).

A run of 5 helical transmembrane segments spans residues 1-21, 64-84, 112-132, 135-155, and 156-173; these read MWLLALVVAYLIGSIPTAYVV, VLAVLLGQALGGPVLVILAAL, LAMAPLALFWAFLIWLAVVIF, YISLGSIVAAAVAPFLVIYFH, and RPWPYVLFTFVAAALVIY.

This sequence belongs to the PlsY family. As to quaternary structure, probably interacts with PlsX.

It localises to the cell membrane. It catalyses the reaction an acyl phosphate + sn-glycerol 3-phosphate = a 1-acyl-sn-glycero-3-phosphate + phosphate. The protein operates within lipid metabolism; phospholipid metabolism. Its function is as follows. Catalyzes the transfer of an acyl group from acyl-phosphate (acyl-PO(4)) to glycerol-3-phosphate (G3P) to form lysophosphatidic acid (LPA). This enzyme utilizes acyl-phosphate as fatty acyl donor, but not acyl-CoA or acyl-ACP. The chain is Glycerol-3-phosphate acyltransferase 2 from Moorella thermoacetica (strain ATCC 39073 / JCM 9320).